Here is a 366-residue protein sequence, read N- to C-terminus: Palmitoyltransferase ZDHHC2 (366 aa).

The Cytoplasmic portion of the chain corresponds to 1 to 15 (MAPSGSGGVRRRCRR). A helical transmembrane segment spans residues 16-36 (VLYWIPVVFISLLLGWSYYAY). Residues 37–47 (AIQLCIVSMEN) lie on the Lumenal side of the membrane. The chain crosses the membrane as a helical span at residues 48–68 (IGEQVVCLMAYHLLFAMFVWS). Over 69 to 169 (YWKTIFTLPM…NNCVGFSNYK (101 aa)) the chain is Cytoplasmic. Residues 126 to 176 (RYCDRCQLIKPDRCHHCSVCDKCILKMDHHCPWVNNCVGFSNYKFFLLFLA) form the DHHC domain. Cys156 (S-palmitoyl cysteine intermediate) is an active-site residue. A helical membrane pass occupies residues 170 to 190 (FFLLFLAYSLLYCLFIAATDL). At 191 to 207 (QYFIRFWTNGLPDTQAK) the chain is on the lumenal side. Residues 208-228 (FHIMFLFFAAAMFSVSLSSLF) traverse the membrane as a helical segment. Over 229–366 (GYHCWLVSKN…NPALTMENET (138 aa)) the chain is Cytoplasmic. A compositionally biased stretch (polar residues) spans 297–316 (VNQDPEQPSTPAGLNSTVKN). Residues 297 to 366 (VNQDPEQPST…NPALTMENET (70 aa)) form a disordered region. The tract at residues 298–366 (NQDPEQPSTP…NPALTMENET (69 aa)) is mediates localization to plasma membrane and recycling endosomes. Residues 326 to 336 (PLRESQSHLLK) are compositionally biased toward basic and acidic residues. Residues 334–335 (LL) carry the Non-canonical dileucine endocytic signal motif. Positions 337 to 347 (DSQTWTESSAN) are enriched in polar residues. An NPxY-like endocytic signal motif is present at residues 357–360 (NPAL).

This sequence belongs to the DHHC palmitoyltransferase family. Monomer. Homodimer. The monomeric form has a higher catalytic activity. Post-translationally, autopalmitoylated. As to expression, expressed in all brain regions.

It is found in the postsynaptic density. The protein resides in the postsynaptic recycling endosome membrane. The protein localises to the cell membrane. Its subcellular location is the endoplasmic reticulum membrane. It localises to the golgi apparatus membrane. The catalysed reaction is L-cysteinyl-[protein] + hexadecanoyl-CoA = S-hexadecanoyl-L-cysteinyl-[protein] + CoA. It catalyses the reaction L-cysteinyl-[protein] + tetradecanoyl-CoA = S-tetradecanoyl-L-cysteinyl-[protein] + CoA. The enzyme catalyses L-cysteinyl-[protein] + octadecanoyl-CoA = S-octadecanoyl-L-cysteinyl-[protein] + CoA. Palmitoyltransferase that catalyzes the addition of palmitate onto various protein substrates and is involved in a variety of cellular processes. Has no stringent fatty acid selectivity and in addition to palmitate can also transfer onto target proteins myristate from tetradecanoyl-CoA and stearate from octadecanoyl-CoA. In the nervous system, plays a role in long term synaptic potentiation by palmitoylating AKAP5 through which it regulates protein trafficking from the dendritic recycling endosomes to the plasma membrane and controls both structural and functional plasticity at excitatory synapses. In dendrites, mediates the palmitoylation of DLG4 when synaptic activity decreases and induces synaptic clustering of DLG4 and associated AMPA-type glutamate receptors. Also mediates the de novo and turnover palmitoylation of RGS7BP, a shuttle for Gi/o-specific GTPase-activating proteins/GAPs, promoting its localization to the plasma membrane in response to the activation of G protein-coupled receptors. Through the localization of these GTPase-activating proteins/GAPs, it also probably plays a role in G protein-coupled receptors signaling in neurons. Also probably plays a role in cell adhesion by palmitoylating CD9 and CD151 to regulate their expression and function. Palmitoylates the endoplasmic reticulum protein CKAP4 and regulates its localization to the plasma membrane. Could also palmitoylate LCK and regulate its localization to the plasma membrane. This is Palmitoyltransferase ZDHHC2 from Mus musculus (Mouse).